Here is a 429-residue protein sequence, read N- to C-terminus: Adenylosuccinate synthetase (429 aa).

Residues 12–18 and 40–42 each bind GTP; these read GDEGKGK and GHT. The active-site Proton acceptor is the Asp13. Mg(2+)-binding residues include Asp13 and Gly40. IMP-binding positions include 13–16, 38–41, Thr128, Arg142, Gln223, Thr238, and Arg302; these read DEGK and NAGH. His41 (proton donor) is an active-site residue. A substrate-binding site is contributed by 298–304; the sequence is VNTGRPR. Residues Arg304, 330-332, and 412-414 each bind GTP; these read KLD and GVG.

Belongs to the adenylosuccinate synthetase family. Homodimer. Mg(2+) is required as a cofactor.

It is found in the cytoplasm. It catalyses the reaction IMP + L-aspartate + GTP = N(6)-(1,2-dicarboxyethyl)-AMP + GDP + phosphate + 2 H(+). The protein operates within purine metabolism; AMP biosynthesis via de novo pathway; AMP from IMP: step 1/2. Functionally, plays an important role in the de novo pathway of purine nucleotide biosynthesis. Catalyzes the first committed step in the biosynthesis of AMP from IMP. The polypeptide is Adenylosuccinate synthetase (Paenarthrobacter aurescens (strain TC1)).